The chain runs to 294 residues: Shikimate dehydrogenase (NADP(+)) (294 aa).

Residues 23–25 (SRS) and Thr76 contribute to the shikimate site. Residue Lys80 is the Proton acceptor of the active site. Shikimate contacts are provided by Asn101 and Asp116. NADP(+) contacts are provided by residues 141 to 145 (GAGGA) and Met233. Residue Tyr235 coordinates shikimate. Gly256 serves as a coordination point for NADP(+).

This sequence belongs to the shikimate dehydrogenase family. Homodimer.

The enzyme catalyses shikimate + NADP(+) = 3-dehydroshikimate + NADPH + H(+). It participates in metabolic intermediate biosynthesis; chorismate biosynthesis; chorismate from D-erythrose 4-phosphate and phosphoenolpyruvate: step 4/7. Involved in the biosynthesis of the chorismate, which leads to the biosynthesis of aromatic amino acids. Catalyzes the reversible NADPH linked reduction of 3-dehydroshikimate (DHSA) to yield shikimate (SA). In Methylibium petroleiphilum (strain ATCC BAA-1232 / LMG 22953 / PM1), this protein is Shikimate dehydrogenase (NADP(+)).